We begin with the raw amino-acid sequence, 220 residues long: Adenylate kinase (220 aa).

Residue 10 to 15 (GSGKST) participates in ATP binding. Positions 30–59 (ASGDIIRAEIKARTPLGIEMERYLSRGDLI) are NMP. Residues arginine 36, 57-59 (DLI), 83-86 (GYPR), and glutamine 90 contribute to the AMP site. Positions 124 to 161 (GRRICSKCGAVYHVEFNPPKVPGKCDICGGELIQRPDD) are LID. ATP is bound at residue arginine 125. Positions 128 and 131 each coordinate Zn(2+). Residue 134–135 (VY) coordinates ATP. Zn(2+)-binding residues include cysteine 148 and cysteine 151. Positions 158 and 169 each coordinate AMP. Glycine 197 serves as a coordination point for ATP.

It belongs to the adenylate kinase family. As to quaternary structure, monomer.

Its subcellular location is the cytoplasm. The enzyme catalyses AMP + ATP = 2 ADP. It functions in the pathway purine metabolism; AMP biosynthesis via salvage pathway; AMP from ADP: step 1/1. Functionally, catalyzes the reversible transfer of the terminal phosphate group between ATP and AMP. Plays an important role in cellular energy homeostasis and in adenine nucleotide metabolism. The sequence is that of Adenylate kinase from Pyrococcus abyssi (strain GE5 / Orsay).